The primary structure comprises 292 residues: 4-hydroxy-tetrahydrodipicolinate synthase (292 aa).

Position 45 (Thr-45) interacts with pyruvate. Catalysis depends on Tyr-133, which acts as the Proton donor/acceptor. The active-site Schiff-base intermediate with substrate is Lys-161. Ile-203 is a binding site for pyruvate.

This sequence belongs to the DapA family. In terms of assembly, homodimer.

The protein localises to the cytoplasm. It carries out the reaction L-aspartate 4-semialdehyde + pyruvate = (2S,4S)-4-hydroxy-2,3,4,5-tetrahydrodipicolinate + H2O + H(+). It functions in the pathway amino-acid biosynthesis; L-lysine biosynthesis via DAP pathway; (S)-tetrahydrodipicolinate from L-aspartate: step 3/4. In terms of biological role, catalyzes the condensation of (S)-aspartate-beta-semialdehyde [(S)-ASA] and pyruvate to 4-hydroxy-tetrahydrodipicolinate (HTPA). The sequence is that of 4-hydroxy-tetrahydrodipicolinate synthase from Pseudomonas putida (strain W619).